Consider the following 205-residue polypeptide: Photosystem I assembly protein Ycf4 (205 aa).

Transmembrane regions (helical) follow at residues 23–43 and 86–106; these read WATV…SSYI and LMCF…CLIF.

It belongs to the Ycf4 family.

The protein resides in the plastid. The protein localises to the chloroplast thylakoid membrane. Seems to be required for the assembly of the photosystem I complex. The protein is Photosystem I assembly protein Ycf4 of Tetradesmus obliquus (Green alga).